The sequence spans 166 residues: UBA-like domain-containing protein 2 (166 aa).

Positions 120-166 (QQPVWLPPASPTTHLHHHHHHPQPVWPPNSQPTGGPQKAMAAMDGQR) are disordered.

Belongs to the UBALD family.

The sequence is that of UBA-like domain-containing protein 2 (ubald2) from Xenopus tropicalis (Western clawed frog).